Consider the following 75-residue polypeptide: Large ribosomal subunit protein bL31 (75 aa).

This sequence belongs to the bacterial ribosomal protein bL31 family. Type A subfamily. In terms of assembly, part of the 50S ribosomal subunit.

Its function is as follows. Binds the 23S rRNA. The sequence is that of Large ribosomal subunit protein bL31 from Bradyrhizobium diazoefficiens (strain JCM 10833 / BCRC 13528 / IAM 13628 / NBRC 14792 / USDA 110).